Reading from the N-terminus, the 148-residue chain is Large ribosomal subunit protein bL19 (148 aa).

This sequence belongs to the bacterial ribosomal protein bL19 family.

In terms of biological role, this protein is located at the 30S-50S ribosomal subunit interface and may play a role in the structure and function of the aminoacyl-tRNA binding site. The sequence is that of Large ribosomal subunit protein bL19 from Paramagnetospirillum magneticum (strain ATCC 700264 / AMB-1) (Magnetospirillum magneticum).